Reading from the N-terminus, the 111-residue chain is Universal stress protein B (111 aa).

2 helical membrane-spanning segments follow: residues 1 to 21 (MFSTIALFWALCLVCIINMMR) and 90 to 110 (FILTSSLSGLVVICLISMLIW).

It belongs to the universal stress protein B family.

Its subcellular location is the cell inner membrane. This chain is Universal stress protein B, found in Photorhabdus laumondii subsp. laumondii (strain DSM 15139 / CIP 105565 / TT01) (Photorhabdus luminescens subsp. laumondii).